Here is a 23-residue protein sequence, read N- to C-terminus: Cardioactive peptide CAP23 (23 aa).

Cysteine 7 and cysteine 19 are disulfide-bonded.

Belongs to the GBP/PSP1/paralytic peptide family.

Its function is as follows. Has excitatory effects on a semi-isolated heart from larval Manduca sexta, causing an inotropic effect at low concentrations of peptide and chronotropic and inotropic effects at high doses. This is Cardioactive peptide CAP23 from Spodoptera eridania (Southern armyworm).